The chain runs to 218 residues: tRNA (cytidine(56)-2'-O)-methyltransferase (218 aa).

S-adenosyl-L-methionine is bound by residues Leu-81, Gly-106–Val-110, and Ile-124–Glu-131. The segment at Lys-170 to Thr-218 is disordered. A compositionally biased stretch (basic and acidic residues) spans Asp-200–Thr-218.

It belongs to the aTrm56 family. Homodimer.

It is found in the cytoplasm. It catalyses the reaction cytidine(56) in tRNA + S-adenosyl-L-methionine = 2'-O-methylcytidine(56) in tRNA + S-adenosyl-L-homocysteine + H(+). In terms of biological role, specifically catalyzes the AdoMet-dependent 2'-O-ribose methylation of cytidine at position 56 in tRNAs. This is tRNA (cytidine(56)-2'-O)-methyltransferase from Ignicoccus hospitalis (strain KIN4/I / DSM 18386 / JCM 14125).